The chain runs to 148 residues: Transcriptional regulator MraZ (148 aa).

SpoVT-AbrB domains are found at residues 5-51 and 80-123; these read STQL…PQPV and ASDV…DMAK.

Belongs to the MraZ family. Forms oligomers.

It is found in the cytoplasm. It localises to the nucleoid. This is Transcriptional regulator MraZ from Nitrosomonas europaea (strain ATCC 19718 / CIP 103999 / KCTC 2705 / NBRC 14298).